A 240-amino-acid polypeptide reads, in one-letter code: Uridylate kinase (240 aa).

13-16 is a binding site for ATP; the sequence is KASG. Residues 21–26 form an involved in allosteric activation by GTP region; the sequence is GSQGFG. G55 provides a ligand contact to UMP. ATP-binding residues include G56 and R60. Residues D75 and 136 to 143 each bind UMP; that span reads TGNPFFTT. 4 residues coordinate ATP: T163, Q164, Y169, and D172.

It belongs to the UMP kinase family. Homohexamer.

The protein resides in the cytoplasm. The catalysed reaction is UMP + ATP = UDP + ADP. It functions in the pathway pyrimidine metabolism; CTP biosynthesis via de novo pathway; UDP from UMP (UMPK route): step 1/1. Allosterically activated by GTP. Inhibited by UTP. Its function is as follows. Catalyzes the reversible phosphorylation of UMP to UDP. The chain is Uridylate kinase from Brucella melitensis biotype 1 (strain ATCC 23456 / CCUG 17765 / NCTC 10094 / 16M).